Here is a 449-residue protein sequence, read N- to C-terminus: CCA-adding enzyme (449 aa).

The ATP site is built by Ser53 and Lys56. Positions 53 and 56 each coordinate CTP. Positions 65, 67, and 119 each coordinate Mg(2+). 3 residues coordinate ATP: His142, Lys161, and Tyr170. Residues His142, Lys161, and Tyr170 each contribute to the CTP site.

Belongs to the tRNA nucleotidyltransferase/poly(A) polymerase family. Archaeal CCA-adding enzyme subfamily. As to quaternary structure, homodimer. The cofactor is Mg(2+).

The catalysed reaction is a tRNA precursor + 2 CTP + ATP = a tRNA with a 3' CCA end + 3 diphosphate. It carries out the reaction a tRNA with a 3' CCA end + 2 CTP + ATP = a tRNA with a 3' CCACCA end + 3 diphosphate. Its function is as follows. Catalyzes the addition and repair of the essential 3'-terminal CCA sequence in tRNAs without using a nucleic acid template. Adds these three nucleotides in the order of C, C, and A to the tRNA nucleotide-73, using CTP and ATP as substrates and producing inorganic pyrophosphate. tRNA 3'-terminal CCA addition is required both for tRNA processing and repair. Also involved in tRNA surveillance by mediating tandem CCA addition to generate a CCACCA at the 3' terminus of unstable tRNAs. While stable tRNAs receive only 3'-terminal CCA, unstable tRNAs are marked with CCACCA and rapidly degraded. In Pyrococcus horikoshii (strain ATCC 700860 / DSM 12428 / JCM 9974 / NBRC 100139 / OT-3), this protein is CCA-adding enzyme.